The primary structure comprises 111 residues: WAP four-disulfide core domain protein 12 (111 aa).

An N-terminal signal peptide occupies residues 1-23 (MGSSSFLVLMVSLALVTLVAAEG). Positions 27–74 (NIEKPGVCPADNIRCIKSDPPQCHTDQDCQGIRKCCYLHCGFKCVIPV) constitute a WAP domain. 4 cysteine pairs are disulfide-bonded: cysteine 34–cysteine 62, cysteine 41–cysteine 66, cysteine 49–cysteine 61, and cysteine 55–cysteine 70. The disordered stretch occupies residues 80–111 (GGNKDEDVSRPCPEPGWEAKPPGVFSTRCPQK).

It is found in the secreted. Its function is as follows. Antibacterial protein. Putative acid-stable proteinase inhibitor. The chain is WAP four-disulfide core domain protein 12 (WFDC12) from Callithrix jacchus (White-tufted-ear marmoset).